A 184-amino-acid chain; its full sequence is Type-1 fimbrial protein, A chain (184 aa).

The signal sequence occupies residues 1 to 23; that stretch reads MKIKTLAIVVLSALSLSSTAALA. A disulfide bond links Cys46 and Cys86.

Belongs to the fimbrial protein family.

The protein resides in the fimbrium. In terms of biological role, fimbriae (also called pili), polar filaments radiating from the surface of the bacterium to a length of 0.5-1.5 micrometers and numbering 100-300 per cell, enable bacteria to colonize the epithelium of specific host organs. In Escherichia coli, this protein is Type-1 fimbrial protein, A chain.